Consider the following 425-residue polypeptide: Histidine--tRNA ligase (425 aa).

Belongs to the class-II aminoacyl-tRNA synthetase family. Homodimer.

The protein resides in the cytoplasm. It carries out the reaction tRNA(His) + L-histidine + ATP = L-histidyl-tRNA(His) + AMP + diphosphate + H(+). The polypeptide is Histidine--tRNA ligase (Listeria innocua serovar 6a (strain ATCC BAA-680 / CLIP 11262)).